The primary structure comprises 437 residues: F-box/FBD/LRR-repeat protein At5g22700 (437 aa).

Residues 5 to 51 (GDRISSLPDELLCQILSNLPTKNAVTTSILSTRWRSIWLSTPVLDID) form the F-box domain. LRR repeat units lie at residues 86 to 113 (RDDVDMCTIMPWIQDAVNRRIQHLEVDC), 134 to 160 (SLRLHFVTLHRYEFVSLPNLKVMHLEE), 161 to 186 (NIYYCLETLENFISSCPVLEDLTVVR), 187 to 210 (IVDIITEKILRVRSRSLNSLKLVL), 215 to 240 (GWFIDDIDEWKVIIDAPRLAYLSLKD), 272 to 297 (PVTFERSNVGKLLTGLSSIRDLTISG), and 322 to 350 (NARFYDCDLEMLPCVLESCPNLKSLVLGL). The region spanning 361-406 (RVSSVPPCFLSSLEFVEIRSRLCRKRYVMKVARYFAKNSVMLKKFV) is the FBD domain.

This chain is F-box/FBD/LRR-repeat protein At5g22700, found in Arabidopsis thaliana (Mouse-ear cress).